A 368-amino-acid chain; its full sequence is GLABROUS1 enhancer-binding protein-like (368 aa).

The disordered stretch occupies residues 1–123 (MAPKKAEEVV…TSDTEHVKKP (123 aa)). A compositionally biased stretch (acidic residues) spans 17–31 (SEEEESGSSGEESES). A compositionally biased stretch (basic and acidic residues) spans 35 to 47 (VPKKVESSQKPES). Residues 84–97 (TSGSAATVPESSTA) show a composition bias toward polar residues. Positions 100–123 (PLKEAAPEAIKKQKTSDTEHVKKP) are enriched in basic and acidic residues.

It belongs to the GeBP family. As to quaternary structure, mono-, di- and oligomers. Associated with the Mediator complex. Interacts with MED6. Interacts with MED10A, MED28 and MED32. Interacts with DEK3.

The protein localises to the nucleus. Its function is as follows. Transcription factor that binds promoters containing the CryR2 element, 5'-ACATAWCT-3'. The DNA-binding activity is decreased upon direct physical interaction with the mediator subunits and is modulated by redox conditions. The oxidized protein is the preferential binding form. The polypeptide is GLABROUS1 enhancer-binding protein-like (Arabidopsis thaliana (Mouse-ear cress)).